We begin with the raw amino-acid sequence, 298 residues long: METQRLRIAMQKSGRLSQDSQALFKSCGLKINLREQRLIAHVENMPIDILRVRDDDIPGLVMEGVVDLGIIGENVLEEAQLIRASQGLPAQVKTLKQLDFGGCRLSLAVPDDVAYTGPESLAGKRIATSYPGLLKRFFDEKGLNFKSVMLGGSVEVAPRAGLADAICDLVSTGATLEANGLKEVEVIYRSKAVLVQAPNPLNEAKQKLIDKLLPRIQGMQQARESKYIMLHAPKDKLDAITDLLPGAERPTIMQLAGDTNQVALHVVSSETLFWETMEQLKALGASSILVLPIEKMME.

This sequence belongs to the ATP phosphoribosyltransferase family. Long subfamily. It depends on Mg(2+) as a cofactor.

It is found in the cytoplasm. The catalysed reaction is 1-(5-phospho-beta-D-ribosyl)-ATP + diphosphate = 5-phospho-alpha-D-ribose 1-diphosphate + ATP. The protein operates within amino-acid biosynthesis; L-histidine biosynthesis; L-histidine from 5-phospho-alpha-D-ribose 1-diphosphate: step 1/9. Feedback inhibited by histidine. Its function is as follows. Catalyzes the condensation of ATP and 5-phosphoribose 1-diphosphate to form N'-(5'-phosphoribosyl)-ATP (PR-ATP). Has a crucial role in the pathway because the rate of histidine biosynthesis seems to be controlled primarily by regulation of HisG enzymatic activity. In Aeromonas salmonicida (strain A449), this protein is ATP phosphoribosyltransferase.